A 223-amino-acid polypeptide reads, in one-letter code: Putative protein phosphatase 2C 63 (223 aa).

The interval 1–22 (MASSQQAVRETGRGRASSSSAG) is disordered. The region spanning 1-212 (MASSQQAVRE…RNFHVHSSHV (212 aa)) is the PPM-type phosphatase domain.

The protein belongs to the PP2C family.

The catalysed reaction is O-phospho-L-seryl-[protein] + H2O = L-seryl-[protein] + phosphate. The enzyme catalyses O-phospho-L-threonyl-[protein] + H2O = L-threonyl-[protein] + phosphate. The protein is Putative protein phosphatase 2C 63 of Oryza sativa subsp. japonica (Rice).